The chain runs to 97 residues: Putative septation protein SpoVG (97 aa).

The protein belongs to the SpoVG family.

In terms of biological role, could be involved in septation. The sequence is that of Putative septation protein SpoVG from Borreliella burgdorferi (strain ATCC 35210 / DSM 4680 / CIP 102532 / B31) (Borrelia burgdorferi).